The following is a 296-amino-acid chain: MASLKALRNRIASVKSTQKITKAMKMVAAAKLRRAQAQAEAARPYATRMAAMMGALAEGAAENPNAPALLVGNGADRTHLIVVVSADRGLAGPFNASINRAARARARKLEAEGKQVRLFTVGRKGRDFFRRDMREKIIGEANFVGKKTIEFADAEAIANQIIAAFNDGKFDVCTLMFNRFVSVMSQVPSETPLIPASAGQAANDNAGSDQPAGDYEIEPDDGTLLDRLLPRNLAVQIYSALLESAAGEQGARMTAMDNATRNAGEMINRLTLNYNRTRQANITKELIEIISGAEAL.

The tract at residues 194 to 216 is disordered; it reads IPASAGQAANDNAGSDQPAGDYE.

Belongs to the ATPase gamma chain family. In terms of assembly, F-type ATPases have 2 components, CF(1) - the catalytic core - and CF(0) - the membrane proton channel. CF(1) has five subunits: alpha(3), beta(3), gamma(1), delta(1), epsilon(1). CF(0) has three main subunits: a, b and c.

Its subcellular location is the cell inner membrane. Its function is as follows. Produces ATP from ADP in the presence of a proton gradient across the membrane. The gamma chain is believed to be important in regulating ATPase activity and the flow of protons through the CF(0) complex. This Acidiphilium cryptum (strain JF-5) protein is ATP synthase gamma chain.